Here is a 175-residue protein sequence, read N- to C-terminus: Sec-independent protein translocase protein TatB (175 aa).

The chain crosses the membrane as a helical span at residues 1–21 (MFDIGWSELVLIGVVALIAIG). 2 disordered regions span residues 100-132 (KPAETSSTTAIEAPATSSEALTTPTTPEAPTPE) and 155-175 (QAPVVAQDTAPSEAIKDAKAS). Positions 111–132 (EAPATSSEALTTPTTPEAPTPE) are enriched in low complexity.

The protein belongs to the TatB family. In terms of assembly, the Tat system comprises two distinct complexes: a TatABC complex, containing multiple copies of TatA, TatB and TatC subunits, and a separate TatA complex, containing only TatA subunits. Substrates initially bind to the TatABC complex, which probably triggers association of the separate TatA complex to form the active translocon.

It is found in the cell inner membrane. Part of the twin-arginine translocation (Tat) system that transports large folded proteins containing a characteristic twin-arginine motif in their signal peptide across membranes. Together with TatC, TatB is part of a receptor directly interacting with Tat signal peptides. TatB may form an oligomeric binding site that transiently accommodates folded Tat precursor proteins before their translocation. The chain is Sec-independent protein translocase protein TatB from Bradyrhizobium diazoefficiens (strain JCM 10833 / BCRC 13528 / IAM 13628 / NBRC 14792 / USDA 110).